We begin with the raw amino-acid sequence, 1178 residues long: Pyruvate carboxylase 1 (1178 aa).

Residues 18–470 (EKNKILVANR…WTTFIDDTPQ (453 aa)) enclose the Biotin carboxylation domain. ATP is bound by residues Lys-136, Glu-220, and His-255. Residues 140-337 (RNLAAKANVP…IVAAQIQIAA (198 aa)) form the ATP-grasp domain. The active site involves Arg-312. Residues 557–824 (TLLMDTTWRD…DTGINVEHVR (268 aa)) enclose the Pyruvate carboxyltransferase domain. Residues 565–569 (RDAHQ) and Arg-638 contribute to the substrate site. Asp-566 is a binding site for a divalent metal cation. Residues Lys-734, His-764, and His-766 each coordinate a divalent metal cation. Lys-734 is subject to N6-carboxylysine. Thr-898 contributes to the substrate binding site. Positions 1094 to 1169 (KADMHDPLHI…DSSDLLVLLE (76 aa)) constitute a Biotinyl-binding domain. Lys-1135 is subject to N6-biotinyllysine.

As to quaternary structure, homotetramer. The cofactor is biotin. Zn(2+) serves as cofactor.

It localises to the cytoplasm. It carries out the reaction hydrogencarbonate + pyruvate + ATP = oxaloacetate + ADP + phosphate + H(+). The protein operates within carbohydrate biosynthesis; gluconeogenesis. Pyruvate carboxylase catalyzes a 2-step reaction, involving the ATP-dependent carboxylation of the covalently attached biotin in the first step and the transfer of the carboxyl group to pyruvate in the second. In Saccharomyces cerevisiae (strain ATCC 204508 / S288c) (Baker's yeast), this protein is Pyruvate carboxylase 1 (PYC1).